We begin with the raw amino-acid sequence, 174 residues long: Phosphopantetheine adenylyltransferase (174 aa).

T10 is a substrate binding site. ATP is bound by residues 10–11 (TF) and H18. The substrate site is built by K44, L76, and R90. Residues 91 to 93 (GLR), E101, and 126 to 132 (HAYISSS) each bind ATP.

The protein belongs to the bacterial CoaD family. Homohexamer. It depends on Mg(2+) as a cofactor.

The protein resides in the cytoplasm. The enzyme catalyses (R)-4'-phosphopantetheine + ATP + H(+) = 3'-dephospho-CoA + diphosphate. Its pathway is cofactor biosynthesis; coenzyme A biosynthesis; CoA from (R)-pantothenate: step 4/5. Reversibly transfers an adenylyl group from ATP to 4'-phosphopantetheine, yielding dephospho-CoA (dPCoA) and pyrophosphate. The chain is Phosphopantetheine adenylyltransferase from Alkalilimnicola ehrlichii (strain ATCC BAA-1101 / DSM 17681 / MLHE-1).